The sequence spans 188 residues: Peptide deformylase (188 aa).

Fe cation-binding residues include Cys109 and His152. The active site involves Glu153. His156 provides a ligand contact to Fe cation.

The protein belongs to the polypeptide deformylase family. Fe(2+) is required as a cofactor.

The enzyme catalyses N-terminal N-formyl-L-methionyl-[peptide] + H2O = N-terminal L-methionyl-[peptide] + formate. In terms of biological role, removes the formyl group from the N-terminal Met of newly synthesized proteins. Requires at least a dipeptide for an efficient rate of reaction. N-terminal L-methionine is a prerequisite for activity but the enzyme has broad specificity at other positions. This chain is Peptide deformylase, found in Chloroflexus aggregans (strain MD-66 / DSM 9485).